A 208-amino-acid chain; its full sequence is Uracil phosphoribosyltransferase (208 aa).

Residues arginine 78, arginine 103, and 130-138 (DPMLATGGS) each bind 5-phospho-alpha-D-ribose 1-diphosphate. Uracil-binding positions include isoleucine 193 and 198–200 (GDA). Aspartate 199 contacts 5-phospho-alpha-D-ribose 1-diphosphate.

It belongs to the UPRTase family. Mg(2+) serves as cofactor.

The catalysed reaction is UMP + diphosphate = 5-phospho-alpha-D-ribose 1-diphosphate + uracil. It functions in the pathway pyrimidine metabolism; UMP biosynthesis via salvage pathway; UMP from uracil: step 1/1. Allosterically activated by GTP. In terms of biological role, catalyzes the conversion of uracil and 5-phospho-alpha-D-ribose 1-diphosphate (PRPP) to UMP and diphosphate. This chain is Uracil phosphoribosyltransferase, found in Neisseria meningitidis serogroup B (strain ATCC BAA-335 / MC58).